We begin with the raw amino-acid sequence, 710 residues long: Bifunctional lysine-specific demethylase and histidyl-hydroxylase NO66 (710 aa).

Residues Thr103–Leu137 are disordered. Residues Thr109–Val132 show a composition bias toward basic residues. The JmjC domain maps to Cys359–Ala506. Fe cation-binding residues include His405, Asp407, and His472.

The protein belongs to the ROX family. NO66 subfamily. Fe(2+) serves as cofactor.

It localises to the nucleus. The catalysed reaction is N(6),N(6)-dimethyl-L-lysyl(36)-[histone H3] + 2 2-oxoglutarate + 2 O2 = L-lysyl(36)-[histone H3] + 2 formaldehyde + 2 succinate + 2 CO2. Oxygenase that can act as both a histone lysine demethylase and a ribosomal histidine hydroxylase. Specifically demethylates 'Lys-4' (H3K4me) and 'Lys-36' (H3K36me) of histone H3, thereby playing a central role in histone code. This is Bifunctional lysine-specific demethylase and histidyl-hydroxylase NO66 from Brugia malayi (Filarial nematode worm).